Here is a 197-residue protein sequence, read N- to C-terminus: NADH-quinone oxidoreductase subunit C (197 aa).

This sequence belongs to the complex I 30 kDa subunit family. In terms of assembly, NDH-1 is composed of 14 different subunits. Subunits NuoB, C, D, E, F, and G constitute the peripheral sector of the complex.

Its subcellular location is the cell inner membrane. It catalyses the reaction a quinone + NADH + 5 H(+)(in) = a quinol + NAD(+) + 4 H(+)(out). In terms of biological role, NDH-1 shuttles electrons from NADH, via FMN and iron-sulfur (Fe-S) centers, to quinones in the respiratory chain. The immediate electron acceptor for the enzyme in this species is believed to be ubiquinone. Couples the redox reaction to proton translocation (for every two electrons transferred, four hydrogen ions are translocated across the cytoplasmic membrane), and thus conserves the redox energy in a proton gradient. This is NADH-quinone oxidoreductase subunit C from Rickettsia prowazekii (strain Madrid E).